Here is a 115-residue protein sequence, read N- to C-terminus: Large ribosomal subunit protein bL20c (115 aa).

This sequence belongs to the bacterial ribosomal protein bL20 family.

It is found in the plastid. The protein localises to the chloroplast. Binds directly to 23S ribosomal RNA and is necessary for the in vitro assembly process of the 50S ribosomal subunit. It is not involved in the protein synthesizing functions of that subunit. This chain is Large ribosomal subunit protein bL20c, found in Nymphaea alba (White water-lily).